The primary structure comprises 944 residues: ATP-dependent RNA helicase DDX42 (944 aa).

Over residues Met-1 to Gly-18 the composition is skewed to gly residues. Disordered stretches follow at residues Met-1–Phe-119, Met-131–Asp-155, and Glu-182–Ile-203. Over residues Ser-35–Gly-52 the composition is skewed to low complexity. Acidic residues predominate over residues Asp-70–Ser-84. Residues Met-120 to Gln-157 adopt a coiled-coil conformation. Over residues Met-131–Asp-149 the composition is skewed to basic and acidic residues. The Q motif signature appears at Ser-253–Cys-281. Residues Val-284–Val-459 form the Helicase ATP-binding domain. Residue Ala-297–Thr-304 participates in ATP binding. The short motif at Asp-407 to Asp-410 is the DEAD box element. One can recognise a Helicase C-terminal domain in the interval Trp-487–Ala-632. 3 disordered regions span residues Arg-642–Asn-682, Gly-723–Pro-753, and Ser-794–Ser-944. Residues Gly-723–Ser-737 show a composition bias toward low complexity. A compositionally biased stretch (polar residues) spans Leu-738 to Asn-752. Residues Ser-794–Gly-814 are compositionally biased toward low complexity. Residues Gly-815–Ile-824 are compositionally biased toward gly residues. Basic and acidic residues-rich tracts occupy residues Val-825–Thr-887 and Asn-901–Thr-926.

This sequence belongs to the DEAD box helicase family. DDX42 subfamily. Transient component of the SF3B subcomplex of the 17S U2 SnRNP complex.

It localises to the cytoplasm. The protein resides in the nucleus. The enzyme catalyses ATP + H2O = ADP + phosphate + H(+). Its function is as follows. ATP-dependent RNA helicase that binds to partially double-stranded RNAs (dsRNAs) in order to unwind RNA secondary structures. Unwinding is promoted in the presence of single-strand binding proteins. Also mediates RNA duplex formation thereby displacing the single-strand RNA binding protein. ATP and ADP modulate its activity: ATP binding and hydrolysis by DDX42 triggers RNA strand separation, whereas the ADP-bound form of the protein triggers annealing of complementary RNA strands. Required for assembly of the 17S U2 SnRNP complex of the spliceosome, a large ribonucleoprotein complex that removes introns from transcribed pre-mRNAs: DDX42 associates transiently with the SF3B subcomplex of the 17S U2 SnRNP complex and is released after fulfilling its role in the assembly of 17S U2 SnRNP. The polypeptide is ATP-dependent RNA helicase DDX42 (DDX42) (Gallus gallus (Chicken)).